We begin with the raw amino-acid sequence, 354 residues long: Malate dehydrogenase 1, peroxisomal (354 aa).

The peroxisomal targeting signal PTS2 stretch occupies residues 6–14 (RIARISAHL). NAD(+) contacts are provided by residues 49–55 (GAAGGIG) and aspartate 75. 2 residues coordinate substrate: arginine 122 and arginine 128. NAD(+) is bound by residues asparagine 135 and 158-160 (ISN). Substrate-binding residues include asparagine 160 and arginine 194. The Proton acceptor role is filled by histidine 218. Methionine 269 contacts NAD(+).

It belongs to the LDH/MDH superfamily. MDH type 1 family. As to quaternary structure, homodimer. As to expression, expressed in rosette leaves at low levels.

Its subcellular location is the peroxisome. It catalyses the reaction (S)-malate + NAD(+) = oxaloacetate + NADH + H(+). Functionally, catalyzes a reversible NAD-dependent dehydrogenase reaction involved in central metabolism and redox homeostasis between organelle compartments. Peroxisomal NAD-dependent malate dehydrogenase involved in fatty acid beta-oxidation. Reoxidizes NADH from the beta-oxidation and provides NAD for the conversion of fatty acyl-CoA to acetyl-CoA. Does not participate directly in the glyoxylate cycle. Required for maintenance of photosynthetic rates under photorespiratory conditions, and carbon flow during photorespiration. Supplies NADH reductant to the peroxisomal hydroxypyruvate reductase (HPR), which reduces hydroxypyruvate into glycerate in the photorespiratory cycle. The sequence is that of Malate dehydrogenase 1, peroxisomal from Arabidopsis thaliana (Mouse-ear cress).